Consider the following 346-residue polypeptide: Dihydroorotase (346 aa).

Zn(2+) contacts are provided by H14 and H16. Substrate-binding positions include 16-18 and N42; that span reads HLR. Zn(2+)-binding residues include K100, H137, and H175. Position 100 is an N6-carboxylysine (K100). Substrate is bound at residue H137. L220 is a substrate binding site. D248 serves as a coordination point for Zn(2+). D248 is an active-site residue. Positions 252 and 264 each coordinate substrate.

It belongs to the metallo-dependent hydrolases superfamily. DHOase family. Class II DHOase subfamily. As to quaternary structure, homodimer. Zn(2+) is required as a cofactor.

It catalyses the reaction (S)-dihydroorotate + H2O = N-carbamoyl-L-aspartate + H(+). It functions in the pathway pyrimidine metabolism; UMP biosynthesis via de novo pathway; (S)-dihydroorotate from bicarbonate: step 3/3. In terms of biological role, catalyzes the reversible cyclization of carbamoyl aspartate to dihydroorotate. The protein is Dihydroorotase of Cereibacter sphaeroides (strain ATCC 17025 / ATH 2.4.3) (Rhodobacter sphaeroides).